The chain runs to 766 residues: Phosphoribosylformylglycinamidine synthase subunit PurL (766 aa).

The active site involves H66. Positions 69 and 113 each coordinate ATP. E115 is a Mg(2+) binding site. Residues 116–119 (SHNH) and R138 contribute to the substrate site. Residue H117 is the Proton acceptor of the active site. Residue D139 coordinates Mg(2+). Q264 provides a ligand contact to substrate. D292 is a Mg(2+) binding site. 336–338 (ESQ) provides a ligand contact to substrate. ATP-binding residues include N524 and G561. Mg(2+) is bound at residue N562. S564 is a substrate binding site.

It belongs to the FGAMS family. As to quaternary structure, monomer. Part of the FGAM synthase complex composed of 1 PurL, 1 PurQ and 2 PurS subunits.

It localises to the cytoplasm. The catalysed reaction is N(2)-formyl-N(1)-(5-phospho-beta-D-ribosyl)glycinamide + L-glutamine + ATP + H2O = 2-formamido-N(1)-(5-O-phospho-beta-D-ribosyl)acetamidine + L-glutamate + ADP + phosphate + H(+). Its pathway is purine metabolism; IMP biosynthesis via de novo pathway; 5-amino-1-(5-phospho-D-ribosyl)imidazole from N(2)-formyl-N(1)-(5-phospho-D-ribosyl)glycinamide: step 1/2. Functionally, part of the phosphoribosylformylglycinamidine synthase complex involved in the purines biosynthetic pathway. Catalyzes the ATP-dependent conversion of formylglycinamide ribonucleotide (FGAR) and glutamine to yield formylglycinamidine ribonucleotide (FGAM) and glutamate. The FGAM synthase complex is composed of three subunits. PurQ produces an ammonia molecule by converting glutamine to glutamate. PurL transfers the ammonia molecule to FGAR to form FGAM in an ATP-dependent manner. PurS interacts with PurQ and PurL and is thought to assist in the transfer of the ammonia molecule from PurQ to PurL. The chain is Phosphoribosylformylglycinamidine synthase subunit PurL from Mycobacterium tuberculosis (strain CDC 1551 / Oshkosh).